A 1285-amino-acid chain; its full sequence is Nuclear pore complex protein NUP133 (1285 aa).

Disordered stretches follow at residues 1 to 53 and 522 to 580; these read MFSP…PAPW and EPPE…QTAR. Residues 31–41 show a composition bias toward polar residues; sequence TPATQNRNNFI. Basic and acidic residues-rich tracts occupy residues 523–544 and 553–569; these read PPER…DETR and TAGR…DKGN.

This sequence belongs to the nucleoporin Nup133 family. Part of the nuclear pore complex (NPC). The NPC has an eight-fold symmetrical structure comprising a central transport channel and two rings, the cytoplasmic and nuclear rings, to which eight filaments are attached. The cytoplasmic filaments have loose ends, while the nuclear filaments are joined in a distal ring, forming a nuclear basket. NPCs are highly dynamic in configuration and composition, and can be devided in 3 subcomplexes, the NUP62 subcomplex, the NUP107-160 subcomplex and the NUP93 subcomplex, containing approximately 30 different nucleoporin proteins.

It is found in the nucleus envelope. It localises to the nucleus. Its subcellular location is the nuclear pore complex. The chain is Nuclear pore complex protein NUP133 from Arabidopsis thaliana (Mouse-ear cress).